Reading from the N-terminus, the 138-residue chain is Ribulose bisphosphate carboxylase small subunit (138 aa).

It belongs to the RuBisCO small chain family. Heterohexadecamer of 8 large and 8 small subunits.

The protein resides in the plastid. The protein localises to the chloroplast. RuBisCO catalyzes two reactions: the carboxylation of D-ribulose 1,5-bisphosphate, the primary event in carbon dioxide fixation, as well as the oxidative fragmentation of the pentose substrate in the photorespiration process. Both reactions occur simultaneously and in competition at the same active site. Although the small subunit is not catalytic it is essential for maximal activity. In Pyropia yezoensis (Susabi-nori), this protein is Ribulose bisphosphate carboxylase small subunit.